A 245-amino-acid polypeptide reads, in one-letter code: Carboxy-S-adenosyl-L-methionine synthase (245 aa).

Residues Y42, 67–69, 92–93, 120–121, N135, and R202 contribute to the S-adenosyl-L-methionine site; these read GCS, DN, and DI.

The protein belongs to the class I-like SAM-binding methyltransferase superfamily. Cx-SAM synthase family. As to quaternary structure, homodimer.

The catalysed reaction is prephenate + S-adenosyl-L-methionine = carboxy-S-adenosyl-L-methionine + 3-phenylpyruvate + H2O. Its function is as follows. Catalyzes the conversion of S-adenosyl-L-methionine (SAM) to carboxy-S-adenosyl-L-methionine (Cx-SAM). The sequence is that of Carboxy-S-adenosyl-L-methionine synthase from Vibrio vulnificus (strain YJ016).